The primary structure comprises 484 residues: E-selectin (484 aa).

A signal peptide spans methionine 1–alanine 22. Residues tryptophan 23 to tyrosine 140 enclose the C-type lectin domain. Residues tryptophan 23–proline 429 lie on the Extracellular side of the membrane. Cystine bridges form between cysteine 41–cysteine 139, cysteine 112–cysteine 131, cysteine 144–cysteine 155, cysteine 149–cysteine 164, cysteine 166–cysteine 175, cysteine 181–cysteine 222, cysteine 194–cysteine 204, cysteine 208–cysteine 235, cysteine 240–cysteine 285, cysteine 271–cysteine 298, cysteine 303–cysteine 348, cysteine 334–cysteine 361, cysteine 366–cysteine 407, and cysteine 393–cysteine 420. 3 N-linked (GlcNAc...) asparagine glycosylation sites follow: asparagine 61, asparagine 65, and asparagine 79. Glutamate 102, asparagine 104, and glutamate 110 together coordinate Ca(2+). Residues glutamate 102–glutamate 110, glutamate 114–arginine 119, and asparagine 127–glutamate 129 each bind a carbohydrate. Ca(2+) contacts are provided by asparagine 127 and aspartate 128. The EGF-like domain occupies threonine 141–glutamate 176. An N-linked (GlcNAc...) asparagine glycan is attached at asparagine 160. 4 consecutive Sushi domains span residues valine 179–alanine 237, valine 251–alanine 300, valine 301–valine 363, and valine 364–alanine 422. Asparagine 201 is a glycosylation site (N-linked (GlcNAc...) asparagine). Asparagine 254 carries N-linked (GlcNAc...) asparagine glycosylation. 2 N-linked (GlcNAc...) asparagine glycosylation sites follow: asparagine 376 and asparagine 400. A helical membrane pass occupies residues leucine 430–leucine 451. The Cytoplasmic segment spans residues leucine 452–isoleucine 484.

It belongs to the selectin/LECAM family. As to quaternary structure, interacts with SELPLG/PSGL1 and PODXL2 through the sialyl Lewis X epitope. SELPLG sulfation appears not to be required for this interaction.

Its subcellular location is the cell membrane. Its function is as follows. Cell-surface glycoprotein having a role in immunoadhesion. Mediates in the adhesion of blood neutrophils in cytokine-activated endothelium through interaction with SELPLG/PSGL1. May have a role in capillary morphogenesis. This Sus scrofa (Pig) protein is E-selectin (SELE).